The following is a 465-amino-acid chain: UDP-N-acetylmuramate--L-alanine ligase (465 aa).

115–121 (GTHGKTT) contacts ATP.

The protein belongs to the MurCDEF family.

The protein resides in the cytoplasm. It catalyses the reaction UDP-N-acetyl-alpha-D-muramate + L-alanine + ATP = UDP-N-acetyl-alpha-D-muramoyl-L-alanine + ADP + phosphate + H(+). The protein operates within cell wall biogenesis; peptidoglycan biosynthesis. In terms of biological role, cell wall formation. The protein is UDP-N-acetylmuramate--L-alanine ligase of Renibacterium salmoninarum (strain ATCC 33209 / DSM 20767 / JCM 11484 / NBRC 15589 / NCIMB 2235).